Reading from the N-terminus, the 457-residue chain is UDP-N-acetylmuramate--L-alanine ligase (457 aa).

109-115 (GTDGKTT) serves as a coordination point for ATP.

The protein belongs to the MurCDEF family.

It localises to the cytoplasm. It carries out the reaction UDP-N-acetyl-alpha-D-muramate + L-alanine + ATP = UDP-N-acetyl-alpha-D-muramoyl-L-alanine + ADP + phosphate + H(+). It participates in cell wall biogenesis; peptidoglycan biosynthesis. Cell wall formation. In Thermotoga neapolitana (strain ATCC 49049 / DSM 4359 / NBRC 107923 / NS-E), this protein is UDP-N-acetylmuramate--L-alanine ligase.